A 101-amino-acid polypeptide reads, in one-letter code: Integration host factor subunit alpha (101 aa).

A disordered region spans residues 49 to 70 (FGNFQLRDKPQRPGRNPKTGEE).

It belongs to the bacterial histone-like protein family. As to quaternary structure, heterodimer of an alpha and a beta chain.

This protein is one of the two subunits of integration host factor, a specific DNA-binding protein that functions in genetic recombination as well as in transcriptional and translational control. This is Integration host factor subunit alpha from Nitrosospira multiformis (strain ATCC 25196 / NCIMB 11849 / C 71).